The chain runs to 212 residues: Redox-sensing transcriptional repressor Rex (212 aa).

Positions 17–56 (KYHRYLQELMENDIDRISSKELSEKIGFTASQIRQDLNCF) form a DNA-binding region, H-T-H motif. Residue 91 to 96 (GAGNIG) participates in NAD(+) binding.

Belongs to the transcriptional regulatory Rex family. As to quaternary structure, homodimer.

The protein localises to the cytoplasm. Functionally, modulates transcription in response to changes in cellular NADH/NAD(+) redox state. The chain is Redox-sensing transcriptional repressor Rex from Clostridium perfringens (strain SM101 / Type A).